The primary structure comprises 582 residues: Threonine--tRNA ligase (582 aa).

The catalytic stretch occupies residues 185–478 (DHRKLGKELE…LTEQYGGAFP (294 aa)). The Zn(2+) site is built by Cys-278, His-329, and His-455.

This sequence belongs to the class-II aminoacyl-tRNA synthetase family. In terms of assembly, homodimer. Zn(2+) is required as a cofactor.

It is found in the cytoplasm. It catalyses the reaction tRNA(Thr) + L-threonine + ATP = L-threonyl-tRNA(Thr) + AMP + diphosphate + H(+). In terms of biological role, catalyzes the attachment of threonine to tRNA(Thr) in a two-step reaction: L-threonine is first activated by ATP to form Thr-AMP and then transferred to the acceptor end of tRNA(Thr). Also edits incorrectly charged L-seryl-tRNA(Thr). This is Threonine--tRNA ligase from Dehalococcoides mccartyi (strain ATCC BAA-2266 / KCTC 15142 / 195) (Dehalococcoides ethenogenes (strain 195)).